The chain runs to 479 residues: MENLALTTLLLPFIGALVVSFSPQRRAAEWGVLFAALTTLCMLSLISAFYQADKVAVTLTLVNVGDVALFGLVIDRVSTLILFVVVFLGLLVTIYSTGYLTDKNREHPHNGTNRYYAFLLVFIGAMAGLVLSSTLLGQLLFFEITGGCSWALISYYQSDKAQRSALKALLITHIGSLGLYLAAATLFLQTGTFALSAMSELHGDARYLVYGGILFAAWGKSAQLPMQAWLPDAMEAPTPISAYLHAASMVKVGVYIFARAIIDGGNIPHVIGGVGMVMALVTILYGFLMYLPQQDMKRLLAWSTITQLGWMFFGLSLSIFGSRLALEGSIAYIVNHAFAKSLFFLVAGALSYSCGTRLLPRLRGVLHTLPLPGVGFCVAALAITGVPPFNGFFSKFPLFAAGFALSVEYWILLPAMILLMIESVASFAWFIRWFGRVVPGKPSEAVADAAPLPGSMRLVLIVLIVMSLISSVIAATWLQ.

Transmembrane regions (helical) follow at residues 3–23, 30–50, 55–75, 80–100, 117–137, 168–188, 208–228, 238–258, 270–290, 300–320, 330–350, 369–389, 390–410, 411–431, and 458–478; these read NLAL…SFSP, WGVL…SAFY, VAVT…LVID, LILF…TGYL, AFLL…TLLG, ALLI…TLFL, LVYG…PMQA, TPIS…YIFA, VIGG…FLMY, LAWS…LSIF, IAYI…AGAL, LPLP…VPPF, NGFF…VEYW, ILLP…AWFI, and LVLI…ATWL.

The protein belongs to the complex I subunit 5 family.

The protein localises to the cell inner membrane. In terms of biological role, possible component of hydrogenase 4. The protein is Hydrogenase-4 component D of Escherichia coli (strain K12).